Reading from the N-terminus, the 236-residue chain is uncharacterized protein (236 aa).

The interval 217 to 236 (GESPDNVVRGEGGFGSTGGH) is disordered. Positions 226 to 236 (GEGGFGSTGGH) are enriched in gly residues.

This is an uncharacterized protein from Ostreid herpesvirus 1 (isolate France) (OsHV-1).